Here is a 307-residue protein sequence, read N- to C-terminus: Probable GTP 3',8-cyclase (307 aa).

The 227-residue stretch at 5–231 (RFGRPVTNLR…MHRRKKYFIP (227 aa)) folds into the Radical SAM core domain. Residue Arg-14 participates in GTP binding. [4Fe-4S] cluster contacts are provided by Cys-21, Cys-25, and Cys-28. Lys-62 provides a ligand contact to GTP. Gly-66 provides a ligand contact to S-adenosyl-L-methionine. Thr-91 is a GTP binding site. Residue Ser-115 coordinates S-adenosyl-L-methionine. A GTP-binding site is contributed by Lys-151. Residue Met-190 participates in S-adenosyl-L-methionine binding. The [4Fe-4S] cluster site is built by Cys-251 and Cys-254. GTP is bound at residue 256–258 (RLR). [4Fe-4S] cluster is bound at residue Cys-268.

It belongs to the radical SAM superfamily. MoaA family. [4Fe-4S] cluster serves as cofactor.

It catalyses the reaction GTP + AH2 + S-adenosyl-L-methionine = (8S)-3',8-cyclo-7,8-dihydroguanosine 5'-triphosphate + 5'-deoxyadenosine + L-methionine + A + H(+). Its pathway is cofactor biosynthesis; molybdopterin biosynthesis. In terms of biological role, catalyzes the cyclization of GTP to (8S)-3',8-cyclo-7,8-dihydroguanosine 5'-triphosphate. This Thermococcus kodakarensis (strain ATCC BAA-918 / JCM 12380 / KOD1) (Pyrococcus kodakaraensis (strain KOD1)) protein is Probable GTP 3',8-cyclase.